We begin with the raw amino-acid sequence, 389 residues long: Formate-dependent phosphoribosylglycinamide formyltransferase (389 aa).

N(1)-(5-phospho-beta-D-ribosyl)glycinamide-binding positions include 12–13 and Glu-72; that span reads EL. Residues Arg-104, Lys-145, 150 to 155, 185 to 188, and Glu-193 contribute to the ATP site; these read SSGKGQ and EEFI. In terms of domain architecture, ATP-grasp spans 109–301; that stretch reads DLAAKELGLK…EFELHLRAVL (193 aa). 2 residues coordinate Mg(2+): Glu-258 and Glu-271. Residues Asp-278, Lys-350, and 357 to 358 each bind N(1)-(5-phospho-beta-D-ribosyl)glycinamide; that span reads RR.

The protein belongs to the PurK/PurT family. In terms of assembly, homodimer.

It carries out the reaction N(1)-(5-phospho-beta-D-ribosyl)glycinamide + formate + ATP = N(2)-formyl-N(1)-(5-phospho-beta-D-ribosyl)glycinamide + ADP + phosphate + H(+). It functions in the pathway purine metabolism; IMP biosynthesis via de novo pathway; N(2)-formyl-N(1)-(5-phospho-D-ribosyl)glycinamide from N(1)-(5-phospho-D-ribosyl)glycinamide (formate route): step 1/1. Involved in the de novo purine biosynthesis. Catalyzes the transfer of formate to 5-phospho-ribosyl-glycinamide (GAR), producing 5-phospho-ribosyl-N-formylglycinamide (FGAR). Formate is provided by PurU via hydrolysis of 10-formyl-tetrahydrofolate. The protein is Formate-dependent phosphoribosylglycinamide formyltransferase of Phocaeicola vulgatus (strain ATCC 8482 / DSM 1447 / JCM 5826 / CCUG 4940 / NBRC 14291 / NCTC 11154) (Bacteroides vulgatus).